We begin with the raw amino-acid sequence, 235 residues long: Large ribosomal subunit protein uL1 (235 aa).

It belongs to the universal ribosomal protein uL1 family. As to quaternary structure, part of the 50S ribosomal subunit.

In terms of biological role, binds directly to 23S rRNA. The L1 stalk is quite mobile in the ribosome, and is involved in E site tRNA release. Protein L1 is also a translational repressor protein, it controls the translation of the L11 operon by binding to its mRNA. The polypeptide is Large ribosomal subunit protein uL1 (Mycobacterium leprae (strain Br4923)).